The chain runs to 321 residues: uncharacterized protein (321 aa).

Positions 1–58 constitute an HTH lysR-type domain; sequence MTPAQLRAYSAVVRLGSVRAAAAELGLSDAGVSMHVAALRKELDDPLFTRTGAGLAFT. Residues 18 to 37 constitute a DNA-binding region (H-T-H motif); that stretch reads VRAAAAELGLSDAGVSMHVA.

Belongs to the LysR transcriptional regulatory family.

This is an uncharacterized protein from Mycobacterium tuberculosis (strain CDC 1551 / Oshkosh).